Reading from the N-terminus, the 960-residue chain is Pentatricopeptide repeat-containing protein At3g63370, chloroplastic (960 aa).

A chloroplast-targeting transit peptide spans 1-64 (MEYAVTNMRL…PKLACFDGVL (64 aa)). 20 PPR repeats span residues 79–109 (PVEAFAYVLELCGKRRAVSQGRQLHSRIFKT), 115–145 (LDFLAGKLVFMYGKCGSLDDAEKVFDEMPDR), 146–180 (TAFAWNTMIGAYVSNGEPASALALYWNMRVEGVPL), 181–215 (GLSSFPALLKACAKLRDIRSGSELHSLLVKLGYHS), 216–246 (TGFIVNALVSMYAKNDDLSAARRLFDGFQEK), 248–282 (DAVLWNSILSSYSTSGKSLETLELFREMHMTGPAP), 283–317 (NSYTIVSALTACDGFSYAKLGKEIHASVLKSSTHS), 319–349 (ELYVCNALIAMYTRCGKMPQAERILRQMNNA), 350–384 (DVVTWNSLIKGYVQNLMYKEALEFFSDMIAAGHKS), 385–419 (DEVSMTSIIAASGRLSNLLAGMELHAYVIKHGWDS), 420–450 (NLQVGNTLIDMYSKCNLTCYMGRAFLRMHDK), 451–485 (DLISWTTVIAGYAQNDCHVEALELFRDVAKKRMEI), 486–516 (DEMILGSILRASSVLKSMLIVKEIHCHILRK), 520–550 (DTVIQNELVDVYGKCRNMGYATRVFESIKGK), 551–585 (DVVSWTSMISSSALNGNESEAVELFRRMVETGLSA), 586–620 (DSVALLCILSAAASLSALNKGREIHCYLLRKGFCL), 621–651 (EGSIAVAVVDMYACCGDLQSAKAVFDRIERK), 652–686 (GLLQYTSMINAYGMHGCGKAAVELFDKMRHENVSP), 687–717 (DHISFLALLYACSHAGLLDEGRGFLKIMEHE), and 723–753 (WPEHYVCLVDMLGRANCVVEAFEFVKMMKTE). The type E motif stretch occupies residues 758 to 833 (VWCALLAACR…HPGCSWIEMD (76 aa)). A type E(+) motif region spans residues 834–864 (GKVHKFTARDKSHPESKEIYEKLSEVTRKLE). Residues 865 to 960 (REVGYVADTK…SGLCSCGDSW (96 aa)) are type DYW motif.

Belongs to the PPR family. PCMP-H subfamily.

It is found in the plastid. Its subcellular location is the chloroplast. In terms of biological role, involved in RNA editing event in chloroplasts. Required for the editing of a single site in rps14 transcript. The protein is Pentatricopeptide repeat-containing protein At3g63370, chloroplastic (PCMP-H83) of Arabidopsis thaliana (Mouse-ear cress).